A 285-amino-acid chain; its full sequence is MALAAPPGELTLALTPDDKTLDPASLDRALAILAEHGILVLTGMLRTRLTDQLRTAMLDDLPEVLRQQDVPTNFVPGHVQQDPPVRESLLFPDVLLNPVVYQITHAVLGADARNAVYSGNMNLPGSHEQPVHLDEPHLWPGISHPPYCLCVDVPLIDFTLENGSTEYWPGSHVLNPDECYDERGCVLPAELERRRAVAPPVRFPIPVGSVVIRDGRLWHRGVPNLSAAPRPLLAMTHYTEWFDMPPIQLPDTVKSWVDGSDRHTHAHFVAGDVDHLTGDHPFAVR.

It belongs to the PhyH family. Fe cation is required as a cofactor.

The enzyme catalyses kanamycin B + 2-oxoglutarate + O2 = 2'-dehydrokanamycin A + succinate + NH4(+) + CO2. The protein operates within antibiotic biosynthesis; kanamycin biosynthesis. Its function is as follows. Mediates the conversion of kanamycin B into 2'-dehydrokanamycin A during the transformation of kanamycin B to kanamycin A. The chain is Kanamycin B dioxygenase (kanJ) from Streptomyces kanamyceticus.